A 375-amino-acid chain; its full sequence is NADH-ubiquinone oxidoreductase 40 kDa subunit, mitochondrial (375 aa).

Residues 1–26 constitute a mitochondrion transit peptide; the sequence is MAPLTAAMRSTPRIIVSNAFGFQRRA.

This sequence belongs to the complex I NDUFA9 subunit family. In terms of assembly, complex I is composed of about 40 different subunits. The cofactor is FAD.

The protein localises to the mitochondrion matrix. Its function is as follows. Accessory subunit of the mitochondrial membrane respiratory chain NADH dehydrogenase (Complex I), that is believed not to be involved in catalysis. Complex I functions in the transfer of electrons from NADH to the respiratory chain. The immediate electron acceptor for the enzyme is believed to be ubiquinone. The chain is NADH-ubiquinone oxidoreductase 40 kDa subunit, mitochondrial (nuo40) from Neurospora crassa (strain ATCC 24698 / 74-OR23-1A / CBS 708.71 / DSM 1257 / FGSC 987).